A 350-amino-acid chain; its full sequence is Probable poly-beta-1,6-N-acetyl-D-glucosamine export protein (350 aa).

Helical transmembrane passes span 7–29 (ELVYLRAIICAIIIITHLLTQIT), 44–66 (FYIRNIVIFGTPCFIILSQLLTT), 79–101 (TRVKYILIPYILMGLFYSYSESL), 116–138 (LLGQWYGYFIVVIMQFFILSYII), 145–167 (LFNSKILLLLSFILQQSFLYYFT), 187–204 (IIFGWIFYFFLGAYMGYN), 211–233 (FLERYLVIMIVLAVATYFVFIAL), 243–262 (SFSYSLTPYNSIMFIVILGI), 269–291 (ILFNTIQMISAFSFFIYLLHPII), and 306–328 (TMVFLAISLLFILGLCIGVGMIL).

This sequence belongs to the acyltransferase 3 family.

It localises to the cell membrane. Presumably involved in the export of the biofilm adhesin polysaccharide poly-beta-1,6-N-acetyl-D-glucosamine (PNAG, also referred to as PIA) across the cell membrane. This is Probable poly-beta-1,6-N-acetyl-D-glucosamine export protein (icaC) from Staphylococcus aureus (strain Mu50 / ATCC 700699).